Consider the following 103-residue polypeptide: G0/G1 switch protein 2 (103 aa).

Directly interacts with BCL2; this interaction prevents the formation of the anti-apoptotic BAX-BCL2 complex.

It is found in the mitochondrion. Its function is as follows. Promotes apoptosis by binding to BCL2, hence preventing the formation of protective BCL2-BAX heterodimers. The chain is G0/G1 switch protein 2 (G0s2) from Mus musculus (Mouse).